The following is a 96-amino-acid chain: MSRPKKCRHLSSCVPCSLFKPNGIPSSELEKIQLEADEFEALNLGDVQKLSQLDAAASMGISRQTFGYLLASARRKVATAVTQGQALLLPLNVKKD.

Belongs to the UPF0251 family.

This chain is UPF0251 protein Shal_3723, found in Shewanella halifaxensis (strain HAW-EB4).